The primary structure comprises 119 residues: UPF0738 protein BAA_1286 (119 aa).

The protein belongs to the UPF0738 family.

This Bacillus anthracis (strain A0248) protein is UPF0738 protein BAA_1286.